The chain runs to 648 residues: Mitochondrial Rho GTPase 3 (648 aa).

Topologically, residues 1–621 (MWMGVGDSSG…KRSCKLNNRS (621 aa)) are cytoplasmic. Ser11 carries the phosphoserine modification. Residues 12–179 (PKPIRIVVVG…LYYAQKAVID (168 aa)) form the Miro 1 domain. EF-hand domains are found at residues 195 to 230 (RCIA…CFDT) and 316 to 351 (VAIE…APES). Positions 208, 210, 212, 219, 329, 331, 333, 335, and 340 each coordinate Ca(2+). The Miro 2 domain maps to 425–599 (RKVVQCFVFG…FRKILTAAEN (175 aa)). Residues 622 to 644 (LMAVSIGTAVLIAGLASFRLYTA) form a helical membrane-spanning segment. Topologically, residues 645–648 (RKQS) are mitochondrial intermembrane.

Belongs to the mitochondrial Rho GTPase family. As to expression, expressed at very low levels in roots, leaves, stems, flowers and siliques.

Its subcellular location is the mitochondrion outer membrane. Mitochondrial GTPase that may be involved in mitochondrion development. The chain is Mitochondrial Rho GTPase 3 from Arabidopsis thaliana (Mouse-ear cress).